Consider the following 361-residue polypeptide: MMERVYNFSAGPSILPLPVLEKVQKELVNYNGTGMSIMEMSHRSSYFQSIIDEAGSLLRELMNIPDEYEVLFLQGGASLQFSMIPLNLMNTYKKAGYVLTGSWSKKALQEAEKVGEVQVIASSENEKFTTIPKLDGLLGDEKLDYVHITTNNTIEGTKYVDIPHVDKVPLVADMSPNILSERYDVSKFGLIYAGAQKNLGPAGLTIAIIKRDLIGGADRYCPTMLNYETYSKNNSLYNTLPSFSIYVTKLVLEWLKEQGGVSAIEEQNKMKSSLLYNFLDESKLLTSPVDPAYRSLMNIPFTTPSEELNNEFLQKAKERGLVTLKGHRSVGGMRASIYNAMPVQGVQQLVNYMKEFELENR.

Arginine 43 lines the L-glutamate pocket. Residues 77–78, tryptophan 103, threonine 153, aspartate 173, and glutamine 196 each bind pyridoxal 5'-phosphate; that span reads AS. Lysine 197 is subject to N6-(pyridoxal phosphate)lysine. Residue 238-239 participates in pyridoxal 5'-phosphate binding; it reads NT.

The protein belongs to the class-V pyridoxal-phosphate-dependent aminotransferase family. SerC subfamily. As to quaternary structure, homodimer. Pyridoxal 5'-phosphate is required as a cofactor.

It is found in the cytoplasm. The enzyme catalyses O-phospho-L-serine + 2-oxoglutarate = 3-phosphooxypyruvate + L-glutamate. The catalysed reaction is 4-(phosphooxy)-L-threonine + 2-oxoglutarate = (R)-3-hydroxy-2-oxo-4-phosphooxybutanoate + L-glutamate. The protein operates within amino-acid biosynthesis; L-serine biosynthesis; L-serine from 3-phospho-D-glycerate: step 2/3. Catalyzes the reversible conversion of 3-phosphohydroxypyruvate to phosphoserine and of 3-hydroxy-2-oxo-4-phosphonooxybutanoate to phosphohydroxythreonine. In Bacillus anthracis (strain A0248), this protein is Phosphoserine aminotransferase.